The chain runs to 329 residues: MQTTLLKPKTIQVEQLAANKAKVTLEPFERGYGHTLGNALRRVLLSSMVGYSATEVTIAGVLHEYSSIDGVQEDVVNILLNLKGVVFKLHNRDEVTLSLRKDGEGPVLASDIQTPHDVEIINPDHVIAHLSQGGKLDMQIKVEKGRGYVPGTMRRYADEPTKSIGRIVLDASFSPVKRVSYTVESARVEQRTDLDKLLVEIETNGAITAEDAVRASAKILVEQLAVFAQLEGGELAAFDAPAPRSAQQFDPILLRPVDELELTVRSANCLKAENIYYIGDLIQRTENELLKTPNLGRKSLNEIKEVLASRGLTLGMKLESWPPAGLDKR.

The alpha N-terminal domain (alpha-NTD) stretch occupies residues 1–231; it reads MQTTLLKPKT…EQLAVFAQLE (231 aa). Residues 249–329 are alpha C-terminal domain (alpha-CTD); that stretch reads FDPILLRPVD…SWPPAGLDKR (81 aa).

It belongs to the RNA polymerase alpha chain family. In terms of assembly, homodimer. The RNAP catalytic core consists of 2 alpha, 1 beta, 1 beta' and 1 omega subunit. When a sigma factor is associated with the core the holoenzyme is formed, which can initiate transcription.

The enzyme catalyses RNA(n) + a ribonucleoside 5'-triphosphate = RNA(n+1) + diphosphate. DNA-dependent RNA polymerase catalyzes the transcription of DNA into RNA using the four ribonucleoside triphosphates as substrates. The sequence is that of DNA-directed RNA polymerase subunit alpha from Variovorax paradoxus (strain S110).